Reading from the N-terminus, the 265-residue chain is 4-hydroxy-tetrahydrodipicolinate reductase (265 aa).

NAD(+)-binding positions include 7-12 (GASGRM) and Asp-33. Arg-34 serves as a coordination point for NADP(+). Residues 96–98 (GTT) and 120–123 (SANM) each bind NAD(+). His-153 functions as the Proton donor/acceptor in the catalytic mechanism. Position 154 (His-154) interacts with (S)-2,3,4,5-tetrahydrodipicolinate. Lys-157 functions as the Proton donor in the catalytic mechanism. A (S)-2,3,4,5-tetrahydrodipicolinate-binding site is contributed by 163–164 (GT).

Belongs to the DapB family.

The protein resides in the cytoplasm. It carries out the reaction (S)-2,3,4,5-tetrahydrodipicolinate + NAD(+) + H2O = (2S,4S)-4-hydroxy-2,3,4,5-tetrahydrodipicolinate + NADH + H(+). The enzyme catalyses (S)-2,3,4,5-tetrahydrodipicolinate + NADP(+) + H2O = (2S,4S)-4-hydroxy-2,3,4,5-tetrahydrodipicolinate + NADPH + H(+). It functions in the pathway amino-acid biosynthesis; L-lysine biosynthesis via DAP pathway; (S)-tetrahydrodipicolinate from L-aspartate: step 4/4. Catalyzes the conversion of 4-hydroxy-tetrahydrodipicolinate (HTPA) to tetrahydrodipicolinate. The protein is 4-hydroxy-tetrahydrodipicolinate reductase of Burkholderia pseudomallei (strain 1106a).